Consider the following 216-residue polypeptide: DNA-binding protein HupB (216 aa).

Position 2 (Gly2) is a propeptide, removed; alternate. An N-acetylmethionine modification is found at Met3. A bacterial histone-like domain region spans residues 3 to 92; it reads MNKAELIDVL…PGAQFKAVVS (90 aa). Residues Lys5, Lys74, Lys88, Lys105, Lys118, and Lys135 each carry the N6-acetyllysine modification. The segment at 102-216 is disordered; it reads PAVKRGVGAS…KKATARRGRK (115 aa). Residues 103-216 form a degenerate repeats region region; that stretch reads AVKRGVGASA…KKATARRGRK (114 aa). Positions 104–114 are enriched in low complexity; the sequence is VKRGVGASAAK. Positions 115 to 216 are enriched in basic residues; that stretch reads KVAKKAPAKK…KKATARRGRK (102 aa). N6,N6,N6-trimethyllysine is present on Lys140. Lys148 and Lys169 each carry N6-acetyllysine.

It belongs to the bacterial histone-like protein family. Long actinobacterial subfamily. In terms of assembly, oligomerizes. Interacts with topoisomerase 1 (topA). Interacts with Eis. Interacts with antigen 85 proteins (fbpA, fbpB, fbpC). In terms of processing, probably acetylated by Eis in vivo. In vitro acetylated by Eis (strain H37Rv and H37Ra) on many more residues than those identified in vivo. Deacetylated in vitro by NAD-dependent protein deacylase (Rv1151c). Post-translationally, trimethylated on Lys-140 by human SUV39H1; trimethylation inhibits mycobacterial growth. SUV39H1 probably also trimethylates another residue. Probably succinylated by Rv0802c and desuccinylated by NAD-dependent protein deacylase (Rv1151c).

The protein localises to the cytoplasm. It localises to the nucleoid. It is found in the secreted. Its subcellular location is the cell wall. It catalyses the reaction 4 Fe(2+) + O2 + 4 H(+) = 4 Fe(3+) + 2 H2O. Functionally, a nucleoid-associated protein (NAP) that probably plays a role in chromosome compactation. Binds DNA non-specifically, with greater affinity for supercoiled than linear DNA, binds well to nicked DNA, gapped and cruciform DNA. Has a preference for A:T rich DNA. Required for activation of the mtbB operon. Binds the mtbB promoter in the presence of iron, binding is seen with as little as 25 uM Fe(2+) and increases with increasing Fe(2+). RNase E and HupB jointly contribute to cellular adaptation to changing growth conditions and survival during antibiotic treatment and in the host. Plays a role in stress survival. Stimulates supercoiling relaxation by topoisomerase 1 (Top1, topA). Its function is as follows. Binds Fe(3+) but not Fe(2+). Has ferroxidase activity, converts Fe(2+) into Fe(3+) and in the presence of H(2)O(2) prevents the generation of hydroxyl radicals (the Fenton reaction). Protects DNA from damage in the presence of FeSO(4) and H(2)O(2). May function in iron storage. Involved in iron uptake by bacteria (either Fe(3+) or extracellular carboxymycobactin); antibodies against HupB block uptake of both. Following uptake iron is mostly found in the iron siderophores carboxymycobactin (CMb, extracellular) or mycobactin (Mb, lipophilic). Facilitates transfer of iron from CMb to Mb when liposomes plus a cell wall lysate are incubated with CMb. Binds iron, ferri-CMb and ferri-Mb; has 10-fold higher affinity for ferri-Mb. Suggested to transfer iron from CBm to Mb at the cell membrane. In terms of biological role, required for biofilm formation; trimethylation by recombinant human SUV39H1 (a histone methyltransferase) inhibits biofilm formation. Induces lymphoproliferation, particularly in health tuberculin reactors, and is immunogenic. Maybe involved in pathogenesis of inflammatory bowel disease (IBD) in patients with ulcerative colitis and Crohn disease (CD). Bound by anti-neutrophil cytoplasmic antibodies (pANCA), which are a hallmark of IBD. The binding is due to pANCA directed against H1-3 cross-reacting with DBH epitopes. In CD, target of a strong IgA response. May play a role in cell wall assembly. In vitro at low levels enhances formation of TMM and TDM by antigen 85 proteins (fbpA, fbpB, fbpC), at higher levels inhibits TMM and TDM formation. The chain is DNA-binding protein HupB from Mycobacterium tuberculosis (strain ATCC 25618 / H37Rv).